The following is a 229-amino-acid chain: tRNA (guanine-N(7)-)-methyltransferase (229 aa).

4 residues coordinate S-adenosyl-L-methionine: Glu59, Glu84, Asp111, and Asp134. Asp134 is an active-site residue. Lys138 is a substrate binding site. Residues 140 to 145 form an interaction with RNA region; it reads KHNKRR. Residues Asp170 and 207–210 each bind substrate; that span reads TKFE.

Belongs to the class I-like SAM-binding methyltransferase superfamily. TrmB family.

The enzyme catalyses guanosine(46) in tRNA + S-adenosyl-L-methionine = N(7)-methylguanosine(46) in tRNA + S-adenosyl-L-homocysteine. It participates in tRNA modification; N(7)-methylguanine-tRNA biosynthesis. Its function is as follows. Catalyzes the formation of N(7)-methylguanine at position 46 (m7G46) in tRNA. The chain is tRNA (guanine-N(7)-)-methyltransferase from Saccharophagus degradans (strain 2-40 / ATCC 43961 / DSM 17024).